The primary structure comprises 244 residues: ATP synthase subunit b 2 (244 aa).

A helical transmembrane segment spans residues 2–22 (LIDWFTIVAQIINFLILVFLL).

The protein belongs to the ATPase B chain family. F-type ATPases have 2 components, F(1) - the catalytic core - and F(0) - the membrane proton channel. F(1) has five subunits: alpha(3), beta(3), gamma(1), delta(1), epsilon(1). F(0) has four main subunits: a(1), b(1), b'(1) and c(10-14). The alpha and beta chains form an alternating ring which encloses part of the gamma chain. F(1) is attached to F(0) by a central stalk formed by the gamma and epsilon chains, while a peripheral stalk is formed by the delta, b and b' chains.

It localises to the cellular thylakoid membrane. F(1)F(0) ATP synthase produces ATP from ADP in the presence of a proton or sodium gradient. F-type ATPases consist of two structural domains, F(1) containing the extramembraneous catalytic core and F(0) containing the membrane proton channel, linked together by a central stalk and a peripheral stalk. During catalysis, ATP synthesis in the catalytic domain of F(1) is coupled via a rotary mechanism of the central stalk subunits to proton translocation. In terms of biological role, component of the F(0) channel, it forms part of the peripheral stalk, linking F(1) to F(0). The protein is ATP synthase subunit b 2 of Crocosphaera subtropica (strain ATCC 51142 / BH68) (Cyanothece sp. (strain ATCC 51142)).